Consider the following 232-residue polypeptide: NAD(P)H-quinone oxidoreductase subunit K 1 (232 aa).

The [4Fe-4S] cluster site is built by C49, C50, C114, and C145.

It belongs to the complex I 20 kDa subunit family. In terms of assembly, NDH-1 can be composed of about 15 different subunits; different subcomplexes with different compositions have been identified which probably have different functions. The cofactor is [4Fe-4S] cluster.

Its subcellular location is the cellular thylakoid membrane. It carries out the reaction a plastoquinone + NADH + (n+1) H(+)(in) = a plastoquinol + NAD(+) + n H(+)(out). The catalysed reaction is a plastoquinone + NADPH + (n+1) H(+)(in) = a plastoquinol + NADP(+) + n H(+)(out). Functionally, NDH-1 shuttles electrons from an unknown electron donor, via FMN and iron-sulfur (Fe-S) centers, to quinones in the respiratory and/or the photosynthetic chain. The immediate electron acceptor for the enzyme in this species is believed to be plastoquinone. Couples the redox reaction to proton translocation, and thus conserves the redox energy in a proton gradient. Cyanobacterial NDH-1 also plays a role in inorganic carbon-concentration. This Acaryochloris marina (strain MBIC 11017) protein is NAD(P)H-quinone oxidoreductase subunit K 1.